The primary structure comprises 36 residues: Potassium channel toxin alpha-KTx 11.3 (36 aa).

3 cysteine pairs are disulfide-bonded: Cys8-Cys27, Cys13-Cys33, and Cys17-Cys35.

Belongs to the short scorpion toxin superfamily. Potassium channel inhibitor family. Alpha-KTx 11 subfamily. As to expression, expressed by the venom gland.

It is found in the secreted. Its function is as follows. Binds and inhibits voltage-sensitive potassium channels. Inhibits the vertebrate potassium channel Kv1.1/KCNA1 with low affinity. The chain is Potassium channel toxin alpha-KTx 11.3 from Parabuthus granulatus (Granulated thick-tailed scorpion).